A 520-amino-acid chain; its full sequence is AMP-binding domain-containing enzyme iboA (520 aa).

180–191 (LTSGSTSGSPKV) contributes to the ATP binding site. Residues 397–447 (DGNFHTGDLFEKQLDGSYLFRGRGDDWIKSEDSRFIDTKAIEEKINDVCSD) carry the FACS motif.

Belongs to the ATP-dependent AMP-binding enzyme family. Mg(2+) serves as cofactor.

It functions in the pathway secondary metabolite biosynthesis. Its function is as follows. AMP-binding domain-containing enzyme; part of the gene cluster that mediates the biosynthesis of the psychoactive metabolites ibotenic acid and muscimol. The first committed step is glutamate hydroxylation by the 2-oxoglutarate-dependent dioxygenase iboH, and the last step is decarboxylation of ibotenic acid to muscimol by the decarboxylase iboD. The order of the intermediate reactions is somewhat ambiguous. IboA likely activates the carboxylic acid at position 5 to introduce an amide bond, and the flavin monooxygenase iboF generates the N-O bond. There are several options for the latter step. One option is that iboF directly hydroxylates the amide nitrogen formed by iboA to produce a hydroxamic acid species. Another option is that iboF hydroxylates an external N-containing compound, whose resulting N-O bond is subsequently introduced into the hydroxyglutamate scaffold. The paralogous PLP-dependent cystathionine gamma-synthase-like enzymes iboG1 and iboG2 are likely involved in substitution of the OH group at position 3 by the O-N moiety. The first cyclic intermediate is most probably tricholomic acid which is likely desaturated to ibotenic acid by the cytochrome P450 monooxygenase iboC. The sequence is that of AMP-binding domain-containing enzyme iboA from Amanita muscaria (strain Koide BX008).